The chain runs to 316 residues: Ribosomal protein L11 methyltransferase (316 aa).

S-adenosyl-L-methionine contacts are provided by Thr161, Gly182, Asp204, and Asn249.

This sequence belongs to the methyltransferase superfamily. PrmA family.

It is found in the cytoplasm. The catalysed reaction is L-lysyl-[protein] + 3 S-adenosyl-L-methionine = N(6),N(6),N(6)-trimethyl-L-lysyl-[protein] + 3 S-adenosyl-L-homocysteine + 3 H(+). In terms of biological role, methylates ribosomal protein L11. This is Ribosomal protein L11 methyltransferase from Ruminiclostridium cellulolyticum (strain ATCC 35319 / DSM 5812 / JCM 6584 / H10) (Clostridium cellulolyticum).